Here is a 411-residue protein sequence, read N- to C-terminus: Protrudin (411 aa).

The tract at residues 1–27 (MQTSEREGSGPELSPSVMPEAPLESPP) is disordered. Over 1 to 66 (MQTSEREGSG…AGDGVRYLLR (66 aa)) the chain is Cytoplasmic. The segment at 1–92 (MQTSEREGSG…LFLTLNEGAW (92 aa)) is sufficient for homooligomerization. Residues 1–205 (MQTSEREGSG…LYLLPLCWVL (205 aa)) form a sufficient for localization to endoplasmic reticulum tubular network and for interactions with REEP1, REEP5, ATL1, ATL2, ATL3 and SPAST region. A necessary for interaction with RAB11A and function in neurite outgrowth region spans residues 51–64 (LEPLKDAGDGVRYL). A helical membrane pass occupies residues 67 to 87 (WQMPLCSLLTCLGLNVLFLTL). Position 88 (Asn88) is a topological domain, lumenal. A helical transmembrane segment spans residues 89–109 (EGAWYSVGALMISVPALLGYL). Topologically, residues 110-187 (QEVCRARLPE…NPVVSSQFYG (78 aa)) are cytoplasmic. The segment at residues 188–208 (ALLGTICMLYLLPLCWVLTLL) is an intramembrane region (helical). The Cytoplasmic segment spans residues 209–411 (NSTLFLGNVE…CASCNQTLSK (203 aa)). The interval 234–286 (MNPKQEEHAFESPPPPDVGGKGGLMDSTPALTPTEDLTPGSVEEAEEAEPDEE) is disordered. The tract at residues 271 to 361 (TPGSVEEAEE…GCSATFSVLK (91 aa)) is necessary for interaction with KIF5A. Residues 276–286 (EEAEEAEPDEE) show a composition bias toward acidic residues. Positions 286 to 292 (EFKDAIE) are necessary for interaction with VAPA. Residues 344-410 (TNNFGNCTGC…VCASCNQTLS (67 aa)) form an FYVE-type zinc finger. Cys350, Cys353, Cys366, Cys369, Cys374, Cys377, Cys402, and Cys405 together coordinate Zn(2+).

As to quaternary structure, can form homooligomers (monomers, dimers and tetramers). Interacts with RAB11A (GDP-bound form); regulates RAB11A. Interacts with FKBP8; may negatively regulate ZFYVE27 phosphorylation. Interacts with VAPA (via MSP domain); may regulate ZFYVE27 retention in the endoplasmic reticulum and its function in cell projections formation. Interacts with VAPB (via MSP domain). Interacts with RAB11B (GDP-bound form), REEP1, REEP5, ATL1, ATL2, ATL3, SPAST, SURF4, KIF5A, KIF5B, KIF5C and RTN3. Post-translationally, phosphorylated. Phosphorylation is induced by NGF through the MAPK/ERK pathway and modulates interaction with RAB11A.

Its subcellular location is the recycling endosome membrane. The protein localises to the endoplasmic reticulum membrane. It is found in the cell projection. It localises to the growth cone membrane. Key regulator of RAB11-dependent vesicular trafficking during neurite extension through polarized membrane transport. Promotes axonal elongation and contributes to the establishment of neuronal cell polarity. Involved in nerve growth factor-induced neurite formation in VAPA-dependent manner. Contributes to both the formation and stabilization of the tubular ER network. Involved in ER morphogenesis by regulating the sheet-to-tubule balance and possibly the density of tubule interconnections. Acts as an adapter protein that facilitates the interaction of KIF5A with VAPA, VAPB, SURF4, RAB11A, RAB11B and RTN3 and the ZFYVE27-KIF5A complex contributes to the transport of these proteins in neurons. Can induce formation of neurite-like membrane protrusions in non-neuronal cells in a KIF5A/B-dependent manner. This is Protrudin (ZFYVE27) from Pongo abelii (Sumatran orangutan).